Here is a 97-residue protein sequence, read N- to C-terminus: uncharacterized protein (97 aa).

This is an uncharacterized protein from Mycoplasma capricolum subsp. capricolum (strain California kid / ATCC 27343 / NCTC 10154).